The following is a 165-amino-acid chain: Chorismate pyruvate-lyase (165 aa).

Residues methionine 35, arginine 77, leucine 115, and glutamate 156 each contribute to the substrate site.

This sequence belongs to the UbiC family. As to quaternary structure, monomer.

The protein resides in the cytoplasm. It carries out the reaction chorismate = 4-hydroxybenzoate + pyruvate. It participates in cofactor biosynthesis; ubiquinone biosynthesis. Functionally, removes the pyruvyl group from chorismate, with concomitant aromatization of the ring, to provide 4-hydroxybenzoate (4HB) for the ubiquinone pathway. The protein is Chorismate pyruvate-lyase of Salmonella gallinarum (strain 287/91 / NCTC 13346).